The primary structure comprises 380 residues: Cytochrome b (380 aa).

A run of 4 helical transmembrane segments spans residues 34 to 54 (SGSLLGLCLVVQILTGIFLAM), 78 to 99 (WFLRYVHANGVSLFFICMYCHI), 114 to 134 (WNVGVILFLVTILTAFMGYVL), and 179 to 199 (FFPFHFLFPFIIAALAVIHLV). The heme b site is built by histidine 84 and histidine 98. Heme b contacts are provided by histidine 183 and histidine 197. An a ubiquinone-binding site is contributed by histidine 202. A run of 4 helical transmembrane segments spans residues 227-247 (TKDTVGFILLVAALFSLALLF), 289-309 (LGGVIALVAAILVLFLMPLLN), 321-341 (LSQAAFWLLVAHLFILTWIGS), and 348-369 (YVLLGQVASVLYFSLFIFGFPI).

This sequence belongs to the cytochrome b family. As to quaternary structure, the main subunits of complex b-c1 are: cytochrome b, cytochrome c1 and the Rieske protein. It depends on heme b as a cofactor.

The protein resides in the mitochondrion inner membrane. Functionally, component of the ubiquinol-cytochrome c reductase complex (complex III or cytochrome b-c1 complex) that is part of the mitochondrial respiratory chain. The b-c1 complex mediates electron transfer from ubiquinol to cytochrome c. Contributes to the generation of a proton gradient across the mitochondrial membrane that is then used for ATP synthesis. The chain is Cytochrome b (MT-CYB) from Strongylocentrotus purpuratus (Purple sea urchin).